The chain runs to 214 residues: Uracil phosphoribosyltransferase (214 aa).

5-phospho-alpha-D-ribose 1-diphosphate-binding positions include arginine 107 and 135–143 (DPMLATGKT). Residues isoleucine 198 and 203-205 (GDA) each bind uracil. A 5-phospho-alpha-D-ribose 1-diphosphate-binding site is contributed by aspartate 204.

The protein belongs to the UPRTase family. Requires Mg(2+) as cofactor.

The catalysed reaction is UMP + diphosphate = 5-phospho-alpha-D-ribose 1-diphosphate + uracil. It functions in the pathway pyrimidine metabolism; UMP biosynthesis via salvage pathway; UMP from uracil: step 1/1. Allosterically activated by GTP. Functionally, catalyzes the conversion of uracil and 5-phospho-alpha-D-ribose 1-diphosphate (PRPP) to UMP and diphosphate. The polypeptide is Uracil phosphoribosyltransferase (Aeropyrum pernix (strain ATCC 700893 / DSM 11879 / JCM 9820 / NBRC 100138 / K1)).